The following is a 331-amino-acid chain: Ferredoxin--NADP reductase 2 (331 aa).

FAD contacts are provided by E37, Q45, Y50, V90, F124, D286, and T327.

It belongs to the ferredoxin--NADP reductase type 2 family. In terms of assembly, homodimer. FAD is required as a cofactor.

The catalysed reaction is 2 reduced [2Fe-2S]-[ferredoxin] + NADP(+) + H(+) = 2 oxidized [2Fe-2S]-[ferredoxin] + NADPH. In Listeria monocytogenes serotype 4b (strain F2365), this protein is Ferredoxin--NADP reductase 2.